Reading from the N-terminus, the 91-residue chain is Acylphosphatase (91 aa).

Positions 5 to 91 (CSKFIVSGHV…EHDYQGFEIL (87 aa)) constitute an Acylphosphatase-like domain. Residues Arg20 and Asn38 contribute to the active site.

It belongs to the acylphosphatase family.

It carries out the reaction an acyl phosphate + H2O = a carboxylate + phosphate + H(+). This is Acylphosphatase (acyP) from Vibrio cholerae serotype O1 (strain ATCC 39315 / El Tor Inaba N16961).